Here is a 166-residue protein sequence, read N- to C-terminus: UPF0304 protein VIBHAR_01542 (166 aa).

Belongs to the UPF0304 family.

This is UPF0304 protein VIBHAR_01542 from Vibrio campbellii (strain ATCC BAA-1116).